Reading from the N-terminus, the 141-residue chain is Hemoglobin subunit alpha (141 aa).

Positions 1–141 (VLSSADKANI…VSTVLTSKYR (141 aa)) constitute a Globin domain. Serine 3 bears the Phosphoserine mark. N6-succinyllysine occurs at positions 7 and 11. Lysine 16 carries the N6-acetyllysine; alternate modification. Lysine 16 carries the N6-succinyllysine; alternate modification. The residue at position 24 (tyrosine 24) is a Phosphotyrosine. N6-succinyllysine is present on lysine 40. At serine 49 the chain carries Phosphoserine. Histidine 58 contributes to the O2 binding site. Histidine 87 lines the heme b pocket. The residue at position 102 (serine 102) is a Phosphoserine. Threonine 108 carries the post-translational modification Phosphothreonine. Phosphoserine is present on residues serine 124 and serine 131. A phosphothreonine mark is found at threonine 134 and threonine 137. The residue at position 138 (serine 138) is a Phosphoserine.

It belongs to the globin family. As to quaternary structure, heterotetramer of two alpha chains and two beta chains. Red blood cells.

Functionally, involved in oxygen transport from the lung to the various peripheral tissues. Hemopressin acts as an antagonist peptide of the cannabinoid receptor CNR1. Hemopressin-binding efficiently blocks cannabinoid receptor CNR1 and subsequent signaling. The protein is Hemoglobin subunit alpha (HBA) of Proteles cristata (Aardwolf).